The following is a 458-amino-acid chain: Sulfite exporter TauE/SafE family protein 2 (458 aa).

A run of 12 helical transmembrane segments spans residues 5–25, 53–73, 74–94, 101–121, 128–148, 150–170, 227–247, 267–287, 324–344, 348–368, 386–406, and 418–438; these read FVPI…EQEP, IELT…SSIS, SAGG…VAGL, SFSA…NLFV, GKTL…LLGV, IGVI…FAVF, FPWI…AVYL, YWLI…WICF, VMAL…GMLI, LLQV…MVLF, GTAS…LKVV, and IIVF…TSYG.

It belongs to the 4-toluene sulfonate uptake permease (TSUP) (TC 2.A.102) family.

The protein localises to the membrane. In Arabidopsis thaliana (Mouse-ear cress), this protein is Sulfite exporter TauE/SafE family protein 2.